We begin with the raw amino-acid sequence, 1124 residues long: Probable leucine-rich repeat receptor-like protein kinase At2g33170 (1124 aa).

The signal sequence occupies residues 1 to 32; it reads MGWWIFEFKKESKSMFVGVLFLLTLLVWTSES. Residues 33 to 752 lie on the Extracellular side of the membrane; the sequence is LNSDGQFLLE…LKAGSARRGR (720 aa). Asparagine 72, asparagine 96, and asparagine 131 each carry an N-linked (GlcNAc...) asparagine glycan. 26 LRR repeats span residues 86–109, 110–132, 134–156, 158–180, 182–205, 206–228, 230–252, 254–277, 278–300, 302–325, 326–348, 350–371, 374–397, 398–420, 422–444, 446–468, 470–491, 494–516, 518–540, 542–564, 566–588, 590–613, 614–636, 638–661, 663–686, and 687–709; these read VVTS…GGLV, NLVY…IGNC, KLEV…INKL, QLRS…IGDL, NLEE…GNLN, KLTT…IGKC, NLKL…IGML, KLQE…GNLT, SLET…IGNM, SLKK…GKLS, KVME…LSKI, ELRL…ELSK, NLAK…QNLT, SMRQ…LGLY, PLWV…ICQQ, NLIL…VLRC, SLLQ…ELCK, NLSA…IGTC, KLQR…ISKL, NLVT…IANC, MLQR…LGSL, QLEI…GNLT, HLTE…LGLL, SLQI…IGNL, LLMY…ENLS, and SLLG…QIFQ. Asparagine 192 carries N-linked (GlcNAc...) asparagine glycosylation. Residue asparagine 275 is glycosylated (N-linked (GlcNAc...) asparagine). A glycan (N-linked (GlcNAc...) asparagine) is linked at asparagine 314. N-linked (GlcNAc...) asparagine glycosylation is present at asparagine 395. Asparagine 494 carries an N-linked (GlcNAc...) asparagine glycan. A glycan (N-linked (GlcNAc...) asparagine) is linked at asparagine 547. Asparagine 611 carries an N-linked (GlcNAc...) asparagine glycan. N-linked (GlcNAc...) asparagine glycosylation is found at asparagine 644, asparagine 684, asparagine 692, asparagine 697, and asparagine 710. Residues 753-773 form a helical membrane-spanning segment; that stretch reads IIIIVSSVIGGISLLLIAIVV. Over 774–1124 the chain is Cytoplasmic; that stretch reads HFLRNPVEPT…CSDLPPPAPP (351 aa). A phosphothreonine mark is found at threonine 808 and threonine 816. The region spanning 819–1100 is the Protein kinase domain; the sequence is FHDSYIVGRG…TMREVVLMLI (282 aa). ATP-binding positions include 825 to 833 and lysine 847; that span reads VGRGACGTV. Phosphotyrosine is present on residues tyrosine 901 and tyrosine 939. The active-site Proton acceptor is the aspartate 952. Serine 986 is modified (phosphoserine). Tyrosine 994 and tyrosine 1001 each carry phosphotyrosine. Threonine 1002 carries the phosphothreonine modification.

The protein belongs to the protein kinase superfamily. Ser/Thr protein kinase family.

Its subcellular location is the membrane. The catalysed reaction is L-seryl-[protein] + ATP = O-phospho-L-seryl-[protein] + ADP + H(+). It carries out the reaction L-threonyl-[protein] + ATP = O-phospho-L-threonyl-[protein] + ADP + H(+). The sequence is that of Probable leucine-rich repeat receptor-like protein kinase At2g33170 from Arabidopsis thaliana (Mouse-ear cress).